The chain runs to 322 residues: Lipoyl synthase (322 aa).

The segment covering 1–12 has biased composition (polar residues); sequence MVTVLNTVNQSG. The interval 1 to 22 is disordered; that stretch reads MVTVLNTVNQSGRLRHPEKAHR. The [4Fe-4S] cluster site is built by Cys60, Cys65, Cys71, Cys86, Cys90, Cys93, and Ser299. Positions 72 to 288 constitute a Radical SAM core domain; sequence WEKKHATFMI…ETIGKTKGFL (217 aa).

This sequence belongs to the radical SAM superfamily. Lipoyl synthase family. Requires [4Fe-4S] cluster as cofactor.

It localises to the cytoplasm. It carries out the reaction [[Fe-S] cluster scaffold protein carrying a second [4Fe-4S](2+) cluster] + N(6)-octanoyl-L-lysyl-[protein] + 2 oxidized [2Fe-2S]-[ferredoxin] + 2 S-adenosyl-L-methionine + 4 H(+) = [[Fe-S] cluster scaffold protein] + N(6)-[(R)-dihydrolipoyl]-L-lysyl-[protein] + 4 Fe(3+) + 2 hydrogen sulfide + 2 5'-deoxyadenosine + 2 L-methionine + 2 reduced [2Fe-2S]-[ferredoxin]. Its pathway is protein modification; protein lipoylation via endogenous pathway; protein N(6)-(lipoyl)lysine from octanoyl-[acyl-carrier-protein]: step 2/2. Functionally, catalyzes the radical-mediated insertion of two sulfur atoms into the C-6 and C-8 positions of the octanoyl moiety bound to the lipoyl domains of lipoate-dependent enzymes, thereby converting the octanoylated domains into lipoylated derivatives. In Brucella abortus (strain S19), this protein is Lipoyl synthase.